The primary structure comprises 563 residues: Coiled-coil domain-containing protein 38 (563 aa).

Positions 1–11 are enriched in polar residues; it reads MSSNLLPTLNS. The tract at residues 1–21 is disordered; sequence MSSNLLPTLNSGGKVKDGSTK. Positions 129-212 form a coiled coil; it reads KRNTIKKFEK…VKSEIAKTEF (84 aa). A disordered region spans residues 272–311; it reads ESGRTAVLSEDASQGRDSQGKPSRSLTRTPEKKKSNLAES. Positions 282–299 are enriched in polar residues; the sequence is DASQGRDSQGKPSRSLTR. Coiled coils occupy residues 384–415 and 497–522; these read NIEF…KSKL and RDEK…AVAQ. A disordered region spans residues 522–563; the sequence is QPKKKLGRRLVFHSKPPSGNKQQLPLVNETKTKSQEEEYFFT. The segment covering 523–533 has biased composition (basic residues); it reads PKKKLGRRLVF.

In terms of assembly, interacts with CCDC42, CFAP53, IFT88 and ODF2. Interacts with CCDC146. Interacts with TEKT3. Interacts with ubiquitinated histone H2A.

Its subcellular location is the cytoplasm. It is found in the cytoskeleton. The protein resides in the microtubule organizing center. The protein localises to the centrosome. It localises to the perinuclear region. Its subcellular location is the cell projection. It is found in the cilium. The protein resides in the flagellum. Functionally, essential for male fertility. Required for sperm flagellum biogenesis. Also required for acrosome biogenesis. Required for the attachment of developing acrosomes to the nucleus during spermiogenesis and may be involved in the transport of fibrous sheath components. This is Coiled-coil domain-containing protein 38 (CCDC38) from Homo sapiens (Human).